An 89-amino-acid polypeptide reads, in one-letter code: UPF0147 protein YN1551_1489 (89 aa).

Belongs to the UPF0147 family.

This Saccharolobus islandicus (strain Y.N.15.51 / Yellowstone #2) (Sulfolobus islandicus) protein is UPF0147 protein YN1551_1489.